A 148-amino-acid chain; its full sequence is Hemoglobin subunit beta-1 (148 aa).

The region spanning 3–148 (EWTDAERTAI…VVSALCRQYH (146 aa)) is the Globin domain. The heme b site is built by H64 and H93.

As to quaternary structure, heterotetramer of two alpha chains and two beta chains. As to expression, red blood cells.

Functionally, involved in oxygen transport from gills to the various peripheral tissues. In Danio rerio (Zebrafish), this protein is Hemoglobin subunit beta-1 (ba1).